A 325-amino-acid polypeptide reads, in one-letter code: MLKAPRFWYQPRSLLGGILSPFSFLYQIIVRIRRGLYAVGLKKISKFPVPIVIVGNITVGGSGKTPFVIWLANELKNRGFRPGVVSRGYGGKANRFPQTVTENSDPLQVGDEAVLLMKKIDCPMVVCRDRGAAVKHLLRNFQCDVVIGDDGLQHYSLGRDLEIALIDDRHLGNGRCLPAGPLREPKSRLNTVDFVVPKQLRPNEIYQLKNPAKKIDFNELKELTVHAVAGIGNPGYFFKQLETLGANVIAHPFRDHYFYRSEDFNFDDDHLIILTEKDAIKCKQFDDERLFCFSVDAVVPDQFQNDFFRLISNIILRKQAQREGI.

58–65 (TVGGSGKT) is an ATP binding site.

Belongs to the LpxK family.

The catalysed reaction is a lipid A disaccharide + ATP = a lipid IVA + ADP + H(+). Its pathway is glycolipid biosynthesis; lipid IV(A) biosynthesis; lipid IV(A) from (3R)-3-hydroxytetradecanoyl-[acyl-carrier-protein] and UDP-N-acetyl-alpha-D-glucosamine: step 6/6. In terms of biological role, transfers the gamma-phosphate of ATP to the 4'-position of a tetraacyldisaccharide 1-phosphate intermediate (termed DS-1-P) to form tetraacyldisaccharide 1,4'-bis-phosphate (lipid IVA). This chain is Tetraacyldisaccharide 4'-kinase, found in Coxiella burnetii (strain RSA 331 / Henzerling II).